The chain runs to 233 residues: Large ribosomal subunit protein uL1 (233 aa).

It belongs to the universal ribosomal protein uL1 family. In terms of assembly, part of the 50S ribosomal subunit.

Its function is as follows. Binds directly to 23S rRNA. The L1 stalk is quite mobile in the ribosome, and is involved in E site tRNA release. In terms of biological role, protein L1 is also a translational repressor protein, it controls the translation of the L11 operon by binding to its mRNA. This chain is Large ribosomal subunit protein uL1, found in Trichlorobacter lovleyi (strain ATCC BAA-1151 / DSM 17278 / SZ) (Geobacter lovleyi).